Reading from the N-terminus, the 129-residue chain is Methylmalonyl-CoA decarboxylase subunit gamma (129 aa).

Composition is skewed to low complexity over residues A24–P39 and P49–A58. Positions A24–A58 are disordered. In terms of domain architecture, Biotinyl-binding spans A51–G129. K95 carries the N6-biotinyllysine modification.

As to quaternary structure, the methylmalonyl-CoA decarboxylase is composed of five subunits: the carboxyltransferase alpha subunit (MmdA), the tunnel beta subunit (MmdB), the biotin-containing gamma subunit (MmdC), and the delta (MmdD) and epsilon (MmdE) subunits. Biotin serves as cofactor.

The protein resides in the cell membrane. It catalyses the reaction (S)-methylmalonyl-CoA + Na(+)(in) + H(+)(out) = propanoyl-CoA + Na(+)(out) + CO2. Its activity is regulated as follows. Completely inhibited by avidin. Its function is as follows. Biotin-containing subunit of the sodium ion pump methylmalonyl-CoA decarboxylase, which converts the chemical energy of a decarboxylation reaction into an electrochemical gradient of Na(+) ions across the cytoplasmic membrane, thereby creating a sodium ion motive force that is used for ATP synthesis. Can also convert malonyl-CoA into acetyl-CoA. This Veillonella parvula (Staphylococcus parvulus) protein is Methylmalonyl-CoA decarboxylase subunit gamma.